The following is a 522-amino-acid chain: MSSLPQYCECGLGECRTDVLPLLYEMSQIATESGDLSSIISILLRLMKRHMKVVRGMVTLYDRDSGSIVLHESFGLSPEEAGKGVYLLGEGIIGRVVETGQSIVVPCIRDEPAFLNRTGSRDRDSDDANLSFICVPILRGRQVMGTISAERLYDNAELLKLDVEVLSILATTTAQAVELYLVENVENVALEAENRRLRSALGERFKPANIIGNSKPMLEVYQLIERVVRTRTTVLILGESGVGKELVAGAIHYNSPAAKGPFVKFNCASLPESVIESELFGHEKGSFTGAIGLRKGRFEEAAGGTIFLDEVGEMSLTTQAKLLRVLQERSFERVGGNTTIHVDLRVIAATNRNLAEMVADGTFAEDLYYRLNVFPITIPPLRERGSDIITLADHFVSRFSREMGIEVNRISTPRLNMLQSYQWPGNVRELENVIERAMLLSEDGVIHGYHLPPSLQAPVVGDSEAPPDGLEARLGAIEYELIVEALKLHHGNMTEAATHLGLTARVLGLRMGKYNLNYKDYR.

Residues 22–183 (LLYEMSQIAT…AQAVELYLVE (162 aa)) are a domain. The 143-residue stretch at 35 to 177 (DLSSIISILL…ILATTTAQAV (143 aa)) folds into the GAF domain. The 230-residue stretch at 210 to 439 (IIGNSKPMLE…LENVIERAML (230 aa)) folds into the Sigma-54 factor interaction domain. ATP-binding positions include 238-245 (GESGVGKE) and 301-310 (AAGGTIFLDE). The segment at residues 493–512 (MTEAATHLGLTARVLGLRMG) is a DNA-binding region (H-T-H motif).

Its function is as follows. Required for the expression of the V-dependent nitrogen fixation system in Azotobacter vinelandii. It is required for the regulation of nitrogenase 2 transcription. Interacts with sigma-54. This is Nitrogen fixation protein VnfA (vnfA) from Azotobacter vinelandii.